Reading from the N-terminus, the 161-residue chain is N5-carboxyaminoimidazole ribonucleotide mutase (161 aa).

Residues Ser-9, Asp-12, and Arg-39 each coordinate substrate.

This sequence belongs to the AIR carboxylase family. Class I subfamily.

It catalyses the reaction 5-carboxyamino-1-(5-phospho-D-ribosyl)imidazole + H(+) = 5-amino-1-(5-phospho-D-ribosyl)imidazole-4-carboxylate. Its pathway is purine metabolism; IMP biosynthesis via de novo pathway; 5-amino-1-(5-phospho-D-ribosyl)imidazole-4-carboxylate from 5-amino-1-(5-phospho-D-ribosyl)imidazole (N5-CAIR route): step 2/2. Its function is as follows. Catalyzes the conversion of N5-carboxyaminoimidazole ribonucleotide (N5-CAIR) to 4-carboxy-5-aminoimidazole ribonucleotide (CAIR). This Aliivibrio fischeri (strain ATCC 700601 / ES114) (Vibrio fischeri) protein is N5-carboxyaminoimidazole ribonucleotide mutase.